We begin with the raw amino-acid sequence, 371 residues long: Lysine racemase (371 aa).

Lysine 39 (proton acceptor) is an active-site residue. Lysine 39 is subject to N6-(pyridoxal phosphate)lysine. Arginine 135 is a binding site for substrate. Tyrosine 266 (proton acceptor) is an active-site residue. Methionine 313 is a substrate binding site.

Belongs to the alanine racemase family. As to quaternary structure, homodimer. Requires pyridoxal 5'-phosphate as cofactor.

It carries out the reaction L-lysine = D-lysine. Functionally, catalyzes the interconversion of D-lysine and L-lysine. Can also use arginine and ornithine, but not alanine. The chain is Lysine racemase from Oenococcus oeni (strain ATCC BAA-331 / PSU-1).